Here is a 792-residue protein sequence, read N- to C-terminus: Endonuclease MutS2 (792 aa).

335 to 342 is a binding site for ATP; that stretch reads GPNTGGKT. The 76-residue stretch at 717–792 folds into the Smr domain; sequence VDLRGLNLEE…GAGVTIVKLK (76 aa).

The protein belongs to the DNA mismatch repair MutS family. MutS2 subfamily. As to quaternary structure, homodimer. Binds to stalled ribosomes, contacting rRNA.

Functionally, endonuclease that is involved in the suppression of homologous recombination and thus may have a key role in the control of bacterial genetic diversity. Its function is as follows. Acts as a ribosome collision sensor, splitting the ribosome into its 2 subunits. Detects stalled/collided 70S ribosomes which it binds and splits by an ATP-hydrolysis driven conformational change. Acts upstream of the ribosome quality control system (RQC), a ribosome-associated complex that mediates the extraction of incompletely synthesized nascent chains from stalled ribosomes and their subsequent degradation. Probably generates substrates for RQC. The chain is Endonuclease MutS2 from Clostridioides difficile (strain 630) (Peptoclostridium difficile).